A 981-amino-acid polypeptide reads, in one-letter code: Translation initiation factor IF-2 (981 aa).

Residues phenylalanine 31–glutamate 370 form a disordered region. Residues glycine 64–glycine 87 are compositionally biased toward low complexity. Over residues glycine 88 to proline 111 the composition is skewed to pro residues. Low complexity predominate over residues alanine 112–alanine 121. Pro residues predominate over residues proline 136–alanine 145. Residues alanine 146–alanine 165 show a composition bias toward low complexity. Residues arginine 256–glycine 269 are compositionally biased toward pro residues. The span at alanine 270–alanine 279 shows a compositional bias: low complexity. The segment covering proline 280 to glycine 339 has biased composition (gly residues). A compositionally biased stretch (basic residues) spans arginine 356–lysine 365. Positions serine 477–aspartate 649 constitute a tr-type G domain. The G1 stretch occupies residues glycine 486–threonine 493. Glycine 486–threonine 493 serves as a coordination point for GTP. Residues glycine 511–histidine 515 form a G2 region. Residues aspartate 536 to glycine 539 are G3. Residues aspartate 536 to histidine 540 and asparagine 590 to aspartate 593 contribute to the GTP site. The tract at residues asparagine 590 to aspartate 593 is G4. The interval serine 626–lysine 628 is G5.

Belongs to the TRAFAC class translation factor GTPase superfamily. Classic translation factor GTPase family. IF-2 subfamily.

The protein resides in the cytoplasm. Functionally, one of the essential components for the initiation of protein synthesis. Protects formylmethionyl-tRNA from spontaneous hydrolysis and promotes its binding to the 30S ribosomal subunits. Also involved in the hydrolysis of GTP during the formation of the 70S ribosomal complex. This chain is Translation initiation factor IF-2, found in Rhodococcus erythropolis (strain PR4 / NBRC 100887).